The primary structure comprises 122 residues: Large ribosomal subunit protein uL14 (122 aa).

This sequence belongs to the universal ribosomal protein uL14 family. Part of the 50S ribosomal subunit. Forms a cluster with proteins L3 and L19. In the 70S ribosome, L14 and L19 interact and together make contacts with the 16S rRNA in bridges B5 and B8.

In terms of biological role, binds to 23S rRNA. Forms part of two intersubunit bridges in the 70S ribosome. The protein is Large ribosomal subunit protein uL14 of Aeromonas salmonicida (strain A449).